We begin with the raw amino-acid sequence, 241 residues long: MTKDTLFSTPIAKLGDFTFDESVAEVFPDMIQRSIPGYANIITAIGMLASRFVTANSNVYDLGCSRGAATLSARRHINQPGVKIIGVDNSQPMVDRCRQHVSAYQSTIPVDIICDDIRHIEIENASMVILNFTLQFLPPEDRRSLLSKIYQGLQPNGILVLSEKFHFEDQNMNALLIDLHHQFKRANGYSELEVSQKRTALENVMRTDSIQAHKMRLAEVGFQQVELWFQCFNFGSMIAVK.

Residues Y38, 63 to 65 (GCS), 88 to 89 (DN), 116 to 117 (DI), N131, and R198 contribute to the S-adenosyl-L-methionine site.

Belongs to the class I-like SAM-binding methyltransferase superfamily. Cx-SAM synthase family. In terms of assembly, homodimer.

The enzyme catalyses prephenate + S-adenosyl-L-methionine = carboxy-S-adenosyl-L-methionine + 3-phenylpyruvate + H2O. In terms of biological role, catalyzes the conversion of S-adenosyl-L-methionine (SAM) to carboxy-S-adenosyl-L-methionine (Cx-SAM). The protein is Carboxy-S-adenosyl-L-methionine synthase of Pasteurella multocida (strain Pm70).